The chain runs to 385 residues: Succinyl-diaminopimelate desuccinylase (385 aa).

Position 73 (His-73) interacts with Zn(2+). Asp-75 is an active-site residue. Residue Asp-106 coordinates Zn(2+). Glu-141 (proton acceptor) is an active-site residue. Residues Glu-142, Glu-170, and His-359 each coordinate Zn(2+).

It belongs to the peptidase M20A family. DapE subfamily. As to quaternary structure, homodimer. Requires Zn(2+) as cofactor. It depends on Co(2+) as a cofactor.

It carries out the reaction N-succinyl-(2S,6S)-2,6-diaminopimelate + H2O = (2S,6S)-2,6-diaminopimelate + succinate. It participates in amino-acid biosynthesis; L-lysine biosynthesis via DAP pathway; LL-2,6-diaminopimelate from (S)-tetrahydrodipicolinate (succinylase route): step 3/3. Its function is as follows. Catalyzes the hydrolysis of N-succinyl-L,L-diaminopimelic acid (SDAP), forming succinate and LL-2,6-diaminopimelate (DAP), an intermediate involved in the bacterial biosynthesis of lysine and meso-diaminopimelic acid, an essential component of bacterial cell walls. This chain is Succinyl-diaminopimelate desuccinylase, found in Methylorubrum extorquens (strain PA1) (Methylobacterium extorquens).